Consider the following 182-residue polypeptide: Transcription termination/antitermination protein NusG (182 aa).

The KOW domain occupies 131–161 (GEVVRVNDGPFADFNGTVEEVDYEKSRLKVS).

This sequence belongs to the NusG family.

Functionally, participates in transcription elongation, termination and antitermination. This is Transcription termination/antitermination protein NusG from Vibrio cholerae serotype O1 (strain ATCC 39315 / El Tor Inaba N16961).